We begin with the raw amino-acid sequence, 527 residues long: MLIKQHKQVWWQEQERLKGIRCKLESEIRSCLNEESIGSECFCELMNFEKELSEEWCAYLTAVIDPIQQLRTGLKRWYPTSQSAPCHEGSDATEVLEEVDFVKKQSKAAFERLHQEQWHLEEDLLDLSVKLLDHSSEEKPNLLSEQPMELVTLDCPYPDLKSSILNEFCNFTERYQEKLEDFDLQLEDIRSNFQLSAEEHWTYQAVLDQYPGNLLGRRALYLDMLQRYFPHKSRHHLVEHEKYCDQYHFAREQRRILIDNWSRSRKDFIQKAMLTLLEACAAHEMGSLLAKDRRRQQELCADLKAKVSQWRAQQEELSRLEMEISARRREREEEKEKLWKKKELLRREETEIKIRKYWAMKQQKWQEMEKRDLRRLEELKKLMAEQSVKDRERVKYRQELLEKRLMERKKLALQEVQEEEERERRLEALRKQVAVAVQSDPVRMMSETLAWKARTGSESEEEFILQKPLFTLTTYNEQQIISDPRLRFELALREAGLHKTQYAKEMLPKIGPQKPPRKDTESTVFKV.

Coiled-coil stretches lie at residues 289–353 (LAKD…TEIK) and 401–438 (LEKRLMERKKLALQEVQEEEERERRLEALRKQVAVAVQ).

This chain is Coiled-coil domain-containing protein 148 (Ccdc148), found in Mus musculus (Mouse).